The sequence spans 316 residues: Probable cell division protein WhiA (316 aa).

A DNA-binding region (H-T-H motif) is located at residues 275-309; it reads TLKELGEMVASGKISKSGINHRLRKLDEIAEQLRT.

It belongs to the WhiA family.

It is found in the cytoplasm. Its subcellular location is the nucleoid. Functionally, involved in cell division and chromosome segregation. May influence the activity of FtsZ. Binds DNA, but does not seem to function as a transcription factor. The protein is Probable cell division protein WhiA of Bacillus subtilis (strain 168).